Consider the following 141-residue polypeptide: Large ribosomal subunit protein uL11 (141 aa).

This sequence belongs to the universal ribosomal protein uL11 family. As to quaternary structure, part of the ribosomal stalk of the 50S ribosomal subunit. Interacts with L10 and the large rRNA to form the base of the stalk. L10 forms an elongated spine to which L12 dimers bind in a sequential fashion forming a multimeric L10(L12)X complex. Post-translationally, one or more lysine residues are methylated.

Functionally, forms part of the ribosomal stalk which helps the ribosome interact with GTP-bound translation factors. This Gloeothece citriformis (strain PCC 7424) (Cyanothece sp. (strain PCC 7424)) protein is Large ribosomal subunit protein uL11.